Reading from the N-terminus, the 302-residue chain is MNKALKGLGIITTIAMLFVLIGGALVTKTGSGMGCGRSWPLCNGSIFPALTLESIIEWSHRFVSGTSGVLVLALAIWTWKKIGHIRETKFLAVMSVVFLILQALLGAAAVVFGSSALIMALHFGISLISFASVLLLTLLVFEADSKQKSESFYIGKTMQFHMIGIIIYTYVVVYTGAYVRHTSSSLACLDFPMCSTENGWLPGKFHEWVQMGHRAAALLLFAWIIAAAVHAARQYKNQKRIYWGWMISLILIILQAASGIAVVYSRLDLGFALAHAFFISCLFGILCYFLLLVARYRRQVQK.

The Cytoplasmic segment spans residues 1 to 6; sequence MNKALK. A helical transmembrane segment spans residues 7–27; it reads GLGIITTIAMLFVLIGGALVT. Residues 28–61 lie on the Extracellular side of the membrane; that stretch reads KTGSGMGCGRSWPLCNGSIFPALTLESIIEWSHR. Cys-35 and Cys-42 are oxidised to a cystine. Residue Glu-57 is part of the active site. His-60 is a binding site for heme o. Residues 62–82 form a helical membrane-spanning segment; that stretch reads FVSGTSGVLVLALAIWTWKKI. The Cytoplasmic segment spans residues 83 to 91; sequence GHIRETKFL. Residues 92–112 form a helical membrane-spanning segment; the sequence is AVMSVVFLILQALLGAAAVVF. The Extracellular portion of the chain corresponds to 113 to 120; it reads GSSALIMA. The chain crosses the membrane as a helical span at residues 121–141; that stretch reads LHFGISLISFASVLLLTLLVF. Residue His-122 coordinates heme o. Topologically, residues 142–158 are cytoplasmic; that stretch reads EADSKQKSESFYIGKTM. A helical membrane pass occupies residues 159-179; that stretch reads QFHMIGIIIYTYVVVYTGAYV. Topologically, residues 180–208 are extracellular; that stretch reads RHTSSSLACLDFPMCSTENGWLPGKFHEW. Cys-188 and Cys-194 form a disulfide bridge. Residues 209–229 traverse the membrane as a helical segment; the sequence is VQMGHRAAALLLFAWIIAAAV. A heme b-binding site is contributed by His-213. Residues 230-242 lie on the Cytoplasmic side of the membrane; sequence HAARQYKNQKRIY. Residues 243-263 form a helical membrane-spanning segment; that stretch reads WGWMISLILIILQAASGIAVV. At 264 to 272 the chain is on the extracellular side; sequence YSRLDLGFA. A helical membrane pass occupies residues 273-293; it reads LAHAFFISCLFGILCYFLLLV. His-275 contacts heme b. At 294-302 the chain is on the cytoplasmic side; that stretch reads ARYRRQVQK.

It belongs to the COX15/CtaA family. Type 1 subfamily. As to quaternary structure, interacts with CtaB. Heme b serves as cofactor.

Its subcellular location is the cell membrane. It catalyses the reaction Fe(II)-heme o + 2 A + H2O = Fe(II)-heme a + 2 AH2. The protein operates within porphyrin-containing compound metabolism; heme A biosynthesis; heme A from heme O: step 1/1. Functionally, catalyzes the conversion of heme O to heme A by two successive hydroxylations of the methyl group at C8. The first hydroxylation forms heme I, the second hydroxylation results in an unstable dihydroxymethyl group, which spontaneously dehydrates, resulting in the formyl group of heme A. The sequence is that of Heme A synthase from Bacillus licheniformis (strain ATCC 14580 / DSM 13 / JCM 2505 / CCUG 7422 / NBRC 12200 / NCIMB 9375 / NCTC 10341 / NRRL NRS-1264 / Gibson 46).